A 561-amino-acid polypeptide reads, in one-letter code: MNINVADLLNGNYILLLFVVLALGLCLGKLRLGSIQLGNSIGVLVVSLLLGQQHFSINTDALNLGFMLFIFCVGVEAGPNFFSIFFRDGKNYLMLALVMVGSALLIALGLGKLFGWDIGLTAGMLAGSMTSTPVLVGAGDTLRHSGIASTQLSSALDNLSLGYALTYLIGLVSLIVGARYLPKLQHQDLQTSAQQIARERGLDTDANRKVYLPVIRAYRVGPELVAWTDGKNLRELGIYRQTGCYIERIRRNGILANPDGDAVLQMGDEIALVGYPDAHARLDPSFRNGKEVFDRDLLDMRIVTEEIVVKNHNAVGRRLAQLKLTDHGCFLNRVIRSQIEMPIDDNVVLNKGDVLQVSGDARRVKTIADRIGFISIHSQVTDLLAFCAFFIIGLMIGMITFQFSNFSFGIGNAAGLLFAGIMLGFLRANHPTFGYIPQGALNMVKEFGLMVFMAGVGLSAGSGISNGLGAVGGQMLIAGLVVSLAPVVICFLFGAYVLRMNRALLFGAMMGARTCAPAMEIISDTARSNIPALGYAGTYAIANVLLTLAGTLIVIIWPGLG.

Helical transmembrane passes span 8-28 (LLNGNYILLLFVVLALGLCLG), 32-52 (LGSIQLGNSIGVLVVSLLLGQ), 66-86 (FMLFIFCVGVEAGPNFFSIFF), 94-114 (MLALVMVGSALLIALGLGKLF), and 158-178 (NLSLGYALTYLIGLVSLIVGA). RCK C-terminal domains are found at residues 200-288 (RGLD…SFRN) and 292-373 (VFDR…RIGF). 5 consecutive transmembrane segments (helical) span residues 383–403 (LLAFCAFFIIGLMIGMITFQF), 406–426 (FSFGIGNAAGLLFAGIMLGFL), 447–467 (FGLMVFMAGVGLSAGSGISNG), 475–495 (MLIAGLVVSLAPVVICFLFGA), and 540–560 (AIANVLLTLAGTLIVIIWPGL).

It belongs to the AAE transporter (TC 2.A.81) family. YbjL subfamily.

Its subcellular location is the cell membrane. The protein is Putative transport protein YbjL of Salmonella arizonae (strain ATCC BAA-731 / CDC346-86 / RSK2980).